Reading from the N-terminus, the 962-residue chain is Glycine dehydrogenase (decarboxylating) (962 aa).

Lys-709 is modified (N6-(pyridoxal phosphate)lysine).

Belongs to the GcvP family. In terms of assembly, the glycine cleavage system is composed of four proteins: P, T, L and H. Requires pyridoxal 5'-phosphate as cofactor.

The catalysed reaction is N(6)-[(R)-lipoyl]-L-lysyl-[glycine-cleavage complex H protein] + glycine + H(+) = N(6)-[(R)-S(8)-aminomethyldihydrolipoyl]-L-lysyl-[glycine-cleavage complex H protein] + CO2. Functionally, the glycine cleavage system catalyzes the degradation of glycine. The P protein binds the alpha-amino group of glycine through its pyridoxal phosphate cofactor; CO(2) is released and the remaining methylamine moiety is then transferred to the lipoamide cofactor of the H protein. The sequence is that of Glycine dehydrogenase (decarboxylating) from Shewanella baltica (strain OS195).